The following is a 697-amino-acid chain: DNA ligase (697 aa).

Residues 44-48, 93-94, and Glu123 each bind NAD(+); these read DGEFD and SL. Lys125 acts as the N6-AMP-lysine intermediate in catalysis. Residues Arg146, Glu186, Lys302, and Lys326 each contribute to the NAD(+) site. Zn(2+)-binding residues include Cys420, Cys423, Cys439, and Cys445. The BRCT domain occupies 609 to 697; it reads SIPRNLEGLS…GPDAVTDSGV (89 aa).

This sequence belongs to the NAD-dependent DNA ligase family. LigA subfamily. Requires Mg(2+) as cofactor. It depends on Mn(2+) as a cofactor.

The enzyme catalyses NAD(+) + (deoxyribonucleotide)n-3'-hydroxyl + 5'-phospho-(deoxyribonucleotide)m = (deoxyribonucleotide)n+m + AMP + beta-nicotinamide D-nucleotide.. Its function is as follows. DNA ligase that catalyzes the formation of phosphodiester linkages between 5'-phosphoryl and 3'-hydroxyl groups in double-stranded DNA using NAD as a coenzyme and as the energy source for the reaction. It is essential for DNA replication and repair of damaged DNA. The chain is DNA ligase from Rhodococcus opacus (strain B4).